We begin with the raw amino-acid sequence, 235 residues long: Uridylate kinase (235 aa).

9–12 is a binding site for ATP; the sequence is KLSG. Residues 17–22 are involved in allosteric activation by GTP; sequence GKDGYG. Residue glycine 51 coordinates UMP. Residues glycine 52 and arginine 56 each contribute to the ATP site. Residues aspartate 71 and 132-139 contribute to the UMP site; that span reads TGNPYFTT. Threonine 159, tyrosine 165, and aspartate 168 together coordinate ATP.

The protein belongs to the UMP kinase family. In terms of assembly, homohexamer.

Its subcellular location is the cytoplasm. It catalyses the reaction UMP + ATP = UDP + ADP. Its pathway is pyrimidine metabolism; CTP biosynthesis via de novo pathway; UDP from UMP (UMPK route): step 1/1. Its activity is regulated as follows. Allosterically activated by GTP. Inhibited by UTP. Catalyzes the reversible phosphorylation of UMP to UDP. This Chlorobium luteolum (strain DSM 273 / BCRC 81028 / 2530) (Pelodictyon luteolum) protein is Uridylate kinase.